A 185-amino-acid polypeptide reads, in one-letter code: Photosystem I assembly protein Ycf4 (185 aa).

2 helical membrane-spanning segments follow: residues Phe22–Ser42 and Ile57–Ser77.

It belongs to the Ycf4 family.

The protein localises to the plastid. The protein resides in the chloroplast thylakoid membrane. Its function is as follows. Seems to be required for the assembly of the photosystem I complex. This is Photosystem I assembly protein Ycf4 from Welwitschia mirabilis (Tree tumbo).